Reading from the N-terminus, the 293-residue chain is Ribosomal protein L11 methyltransferase (293 aa).

Positions 145, 166, 188, and 230 each coordinate S-adenosyl-L-methionine.

The protein belongs to the methyltransferase superfamily. PrmA family.

It localises to the cytoplasm. It catalyses the reaction L-lysyl-[protein] + 3 S-adenosyl-L-methionine = N(6),N(6),N(6)-trimethyl-L-lysyl-[protein] + 3 S-adenosyl-L-homocysteine + 3 H(+). In terms of biological role, methylates ribosomal protein L11. This chain is Ribosomal protein L11 methyltransferase, found in Actinobacillus pleuropneumoniae serotype 5b (strain L20).